The following is a 188-amino-acid chain: Elongation factor P (188 aa).

The protein belongs to the elongation factor P family.

It is found in the cytoplasm. It functions in the pathway protein biosynthesis; polypeptide chain elongation. Its function is as follows. Involved in peptide bond synthesis. Stimulates efficient translation and peptide-bond synthesis on native or reconstituted 70S ribosomes in vitro. Probably functions indirectly by altering the affinity of the ribosome for aminoacyl-tRNA, thus increasing their reactivity as acceptors for peptidyl transferase. The protein is Elongation factor P (efp) of Rickettsia conorii (strain ATCC VR-613 / Malish 7).